The chain runs to 570 residues: Potassium-transporting ATPase potassium-binding subunit (570 aa).

Transmembrane regions (helical) follow at residues 7-27 (AEIA…GVFL), 65-85 (AYAL…YAVL), 95-115 (PQGF…SFIT), 135-155 (LVLT…AAAL), 179-199 (LYLL…LGLP), 254-274 (LTNL…FFAF), 286-306 (ALVI…YATE), 383-403 (GVAI…LMVG), 422-442 (ILAV…AAVL), 489-509 (LGIA…AIAG), and 528-548 (GGLF…LQFF).

The protein belongs to the KdpA family. In terms of assembly, the system is composed of three essential subunits: KdpA, KdpB and KdpC.

It localises to the cell inner membrane. Functionally, part of the high-affinity ATP-driven potassium transport (or Kdp) system, which catalyzes the hydrolysis of ATP coupled with the electrogenic transport of potassium into the cytoplasm. This subunit binds the periplasmic potassium ions and delivers the ions to the membrane domain of KdpB through an intramembrane tunnel. This is Potassium-transporting ATPase potassium-binding subunit from Caulobacter vibrioides (strain ATCC 19089 / CIP 103742 / CB 15) (Caulobacter crescentus).